The following is a 573-amino-acid chain: DNA damage-binding protein CMR1 (573 aa).

The interval 27-94 (DSLNDSISRE…EMEKAEERKR (68 aa)) is disordered. A coiled-coil region spans residues 72-152 (TMEDSEEDKQ…EEIKKEEDST (81 aa)). Residues 79–94 (DKQMREEMEKAEERKR) show a composition bias toward basic and acidic residues. WD repeat units follow at residues 218-259 (ITQQ…DDET), 268-308 (PHGK…STEV), 319-357 (DYPL…KQGE), 361-401 (LHDK…QKNS), 418-456 (HSRL…KLPL), 495-538 (GRWV…LCHL), and 542-573 (DRMT…YLFE).

It belongs to the WD repeat DDB2/WDR76 family.

Its function is as follows. DNA-binding protein that binds to both single- and double-stranded DNA. Binds preferentially to UV-damaged DNA. May be involved in DNA-metabolic processes. The sequence is that of DNA damage-binding protein CMR1 from Meyerozyma guilliermondii (strain ATCC 6260 / CBS 566 / DSM 6381 / JCM 1539 / NBRC 10279 / NRRL Y-324) (Yeast).